A 411-amino-acid polypeptide reads, in one-letter code: Tyrosine--tRNA ligase (411 aa).

Tyr34 is an L-tyrosine binding site. The short motif at 39 to 48 (CTATSLHIGS) is the 'HIGH' region element. 2 residues coordinate L-tyrosine: Tyr171 and Gln175. The 'KMSKS' region signature appears at 231–235 (KMGKT). Lys234 contributes to the ATP binding site. Residues 345-411 (ISAYELFHEA…GKKRHILVRV (67 aa)) form the S4 RNA-binding domain.

Belongs to the class-I aminoacyl-tRNA synthetase family. TyrS type 1 subfamily. As to quaternary structure, homodimer.

The protein localises to the cytoplasm. It catalyses the reaction tRNA(Tyr) + L-tyrosine + ATP = L-tyrosyl-tRNA(Tyr) + AMP + diphosphate + H(+). Catalyzes the attachment of tyrosine to tRNA(Tyr) in a two-step reaction: tyrosine is first activated by ATP to form Tyr-AMP and then transferred to the acceptor end of tRNA(Tyr). This chain is Tyrosine--tRNA ligase, found in Rickettsia massiliae (strain Mtu5).